Reading from the N-terminus, the 302-residue chain is Quinolinate synthase (302 aa).

The iminosuccinate site is built by His-24 and Ser-41. [4Fe-4S] cluster is bound at residue Cys-86. Residues 112-114 and Ser-129 each bind iminosuccinate; that span reads YVN. Cys-171 is a [4Fe-4S] cluster binding site. Residues 197-199 and Thr-214 contribute to the iminosuccinate site; that span reads HPE. Position 259 (Cys-259) interacts with [4Fe-4S] cluster.

This sequence belongs to the quinolinate synthase family. Type 2 subfamily. Requires [4Fe-4S] cluster as cofactor.

It is found in the cytoplasm. The enzyme catalyses iminosuccinate + dihydroxyacetone phosphate = quinolinate + phosphate + 2 H2O + H(+). It participates in cofactor biosynthesis; NAD(+) biosynthesis; quinolinate from iminoaspartate: step 1/1. Functionally, catalyzes the condensation of iminoaspartate with dihydroxyacetone phosphate to form quinolinate. This Dehalococcoides mccartyi (strain ATCC BAA-2266 / KCTC 15142 / 195) (Dehalococcoides ethenogenes (strain 195)) protein is Quinolinate synthase.